The sequence spans 375 residues: RNA exonuclease 4 (375 aa).

The interval 21 to 78 is disordered; the sequence is KTLGSDASSSSASSSTNNRRKLSTSESTKPKRTRLDAKEKDAEGSKSCSPAPTSLPWF. The span at 25 to 35 shows a compositional bias: low complexity; it reads SDASSSSASSS. Positions 53–64 are enriched in basic and acidic residues; that stretch reads TRLDAKEKDAEG. Residues 134–297 form the Exonuclease domain; sequence NYLAIDCEMV…FRSQKPKWDE (164 aa).

The protein belongs to the REXO4 family.

The protein localises to the nucleus. Functionally, exoribonuclease involved in ribosome biosynthesis. Involved in the processing of ITS1, the internal transcribed spacer localized between the 18S and 5.8S rRNAs. This Mycosarcoma maydis (Corn smut fungus) protein is RNA exonuclease 4 (REX4).